A 319-amino-acid polypeptide reads, in one-letter code: Coproporphyrin III ferrochelatase 2 (319 aa).

Residues tyrosine 13, arginine 30, 46–47 (RY), serine 54, and tyrosine 125 contribute to the Fe-coproporphyrin III site. Residues histidine 181 and glutamate 262 each coordinate Fe(2+).

This sequence belongs to the ferrochelatase family.

The protein resides in the cytoplasm. It carries out the reaction Fe-coproporphyrin III + 2 H(+) = coproporphyrin III + Fe(2+). It participates in porphyrin-containing compound metabolism; protoheme biosynthesis. In terms of biological role, involved in coproporphyrin-dependent heme b biosynthesis. Catalyzes the insertion of ferrous iron into coproporphyrin III to form Fe-coproporphyrin III. The polypeptide is Coproporphyrin III ferrochelatase 2 (Bacillus anthracis).